A 194-amino-acid polypeptide reads, in one-letter code: Putative manganese efflux pump MntP (194 aa).

Transmembrane regions (helical) follow at residues 3-23, 37-57, 69-89, 110-132, 147-167, and 172-192; these read PFSIVLIGFAMSTDAFAAAIG, LRAGLIFGCIEAITPVIGWLL, DHWIAFVLLGALGTHMIVAGL, LGLATTGFATSIDAMAVGVSLAF, CTFSMVTAGVMLGRALGNLIG, and MLGGLILVIVGSVILYEHLSG.

It belongs to the MntP (TC 9.B.29) family.

The protein localises to the cell inner membrane. Probably functions as a manganese efflux pump. In Xanthomonas axonopodis pv. citri (strain 306), this protein is Putative manganese efflux pump MntP.